The following is a 301-amino-acid chain: Probable alpha-L-glutamate ligase (301 aa).

The 184-residue stretch at leucine 104–glutamate 287 folds into the ATP-grasp domain. ATP contacts are provided by residues lysine 141, glutamate 178–phenylalanine 179, aspartate 187, and arginine 211–asparagine 213. Aspartate 248, glutamate 260, and asparagine 262 together coordinate Mg(2+). Mn(2+) contacts are provided by aspartate 248, glutamate 260, and asparagine 262.

The protein belongs to the RimK family. Requires Mg(2+) as cofactor. The cofactor is Mn(2+).

The protein is Probable alpha-L-glutamate ligase of Maridesulfovibrio salexigens (strain ATCC 14822 / DSM 2638 / NCIMB 8403 / VKM B-1763) (Desulfovibrio salexigens).